The chain runs to 122 residues: Prefoldin subunit 1 (122 aa).

Alanine 2 is subject to N-acetylalanine.

The protein belongs to the prefoldin subunit beta family. Heterohexamer of two PFD-alpha type and four PFD-beta type subunits.

Functionally, binds specifically to cytosolic chaperonin (c-CPN) and transfers target proteins to it. Binds to nascent polypeptide chain and promotes folding in an environment in which there are many competing pathways for nonnative proteins. The chain is Prefoldin subunit 1 (PFDN1) from Homo sapiens (Human).